Here is a 114-residue protein sequence, read N- to C-terminus: Large ribosomal subunit protein uL22c (114 aa).

The protein belongs to the universal ribosomal protein uL22 family. Part of the 50S ribosomal subunit.

The protein localises to the plastid. Its subcellular location is the chloroplast. Functionally, this protein binds specifically to 23S rRNA. Its function is as follows. The globular domain of the protein is located near the polypeptide exit tunnel on the outside of the subunit, while an extended beta-hairpin is found that lines the wall of the exit tunnel in the center of the 70S ribosome. The sequence is that of Large ribosomal subunit protein uL22c (rpl22) from Gracilaria tenuistipitata (Red alga).